Here is a 325-residue protein sequence, read N- to C-terminus: MADKVQTTLLFLAVGEFSVGILGNAFIGLVNCMDWVKKRKIASIDLILTSLAISRICLLCVILLDCFILVLYPDVYATGKEMRIIDFFWTLTNHLSIWFATCLSIYYFFRIANFFHPLFLWMKWRIDRVISWILLGCVVLSVFISLPATENLNADFRFCVKAKRKTNLTWSCRVNKTQHASTKLFLNLATLLPFCVCLMSFFLLILSLRRHIRRMQLSATGCRDPSTEAHVRALKAVISFLLLFIAYYLSFLVATSSYFMPETELAVIFGESIALIYPSSHSFILILGNNKLRHASLKVIWKVMSILKGRKFQQHKQIGRETMLF.

Residues 1 to 9 are Extracellular-facing; it reads MADKVQTTL. Residues 10 to 30 traverse the membrane as a helical segment; sequence LFLAVGEFSVGILGNAFIGLV. Residues 31–55 lie on the Cytoplasmic side of the membrane; it reads NCMDWVKKRKIASIDLILTSLAISR. The helical transmembrane segment at 56–76 threads the bilayer; sequence ICLLCVILLDCFILVLYPDVY. At 77–94 the chain is on the extracellular side; the sequence is ATGKEMRIIDFFWTLTNH. The chain crosses the membrane as a helical span at residues 95–115; the sequence is LSIWFATCLSIYYFFRIANFF. Residues 116–128 are Cytoplasmic-facing; sequence HPLFLWMKWRIDR. Residues 129–149 form a helical membrane-spanning segment; that stretch reads VISWILLGCVVLSVFISLPAT. Residues 150 to 187 are Extracellular-facing; sequence ENLNADFRFCVKAKRKTNLTWSCRVNKTQHASTKLFLN. Residues Asn-167 and Asn-175 are each glycosylated (N-linked (GlcNAc...) asparagine). A helical membrane pass occupies residues 188–208; the sequence is LATLLPFCVCLMSFFLLILSL. The Cytoplasmic segment spans residues 209-235; that stretch reads RRHIRRMQLSATGCRDPSTEAHVRALK. Residues 236 to 256 traverse the membrane as a helical segment; it reads AVISFLLLFIAYYLSFLVATS. Topologically, residues 257–266 are extracellular; the sequence is SYFMPETELA. A helical transmembrane segment spans residues 267-287; that stretch reads VIFGESIALIYPSSHSFILIL. At 288–319 the chain is on the cytoplasmic side; sequence GNNKLRHASLKVIWKVMSILKGRKFQQHKQIG.

It belongs to the G-protein coupled receptor T2R family.

The protein localises to the membrane. Gustducin-coupled receptor implicated in the perception of bitter compounds in the oral cavity and the gastrointestinal tract. Signals through PLCB2 and the calcium-regulated cation channel TRPM5. The chain is Taste receptor type 2 member 7 (TAS2R7) from Pan paniscus (Pygmy chimpanzee).